The following is a 1365-amino-acid chain: DNA-directed RNA polymerase subunit beta' (1365 aa).

Zn(2+) contacts are provided by Cys249, Cys316, Cys323, and Cys326.

Belongs to the RNA polymerase beta' chain family. RpoC2 subfamily. As to quaternary structure, in cyanobacteria the RNAP catalytic core is composed of 2 alpha, 1 beta, 1 beta', 1 gamma and 1 omega subunit. When a sigma factor is associated with the core the holoenzyme is formed, which can initiate transcription. Requires Zn(2+) as cofactor.

It catalyses the reaction RNA(n) + a ribonucleoside 5'-triphosphate = RNA(n+1) + diphosphate. DNA-dependent RNA polymerase catalyzes the transcription of DNA into RNA using the four ribonucleoside triphosphates as substrates. This Synechococcus sp. (strain CC9311) protein is DNA-directed RNA polymerase subunit beta'.